We begin with the raw amino-acid sequence, 475 residues long: ADP-ribosyltransferase toxin AexT (475 aa).

Residues 93 to 226 (VSPEDLQRLM…LQRAVKAEVA (134 aa)) enclose the Bacterial Rho-GAP domain. The region spanning 260–436 (EGLQEQFGLE…RVLEEASLGE (177 aa)) is the TR mART core domain. Residues arginine 340, serine 364, and glutamate 403 contribute to the active site.

The protein resides in the secreted. Directly involved in the toxicity for RTG-2 (rainbow trout gonad) fish cells. The polypeptide is ADP-ribosyltransferase toxin AexT (aexT) (Aeromonas salmonicida).